The primary structure comprises 280 residues: Ribosomal RNA small subunit methyltransferase A (280 aa).

The S-adenosyl-L-methionine site is built by Asn11, Leu13, Gly37, Glu57, Asp85, and Asn106.

The protein belongs to the class I-like SAM-binding methyltransferase superfamily. rRNA adenine N(6)-methyltransferase family. RsmA subfamily.

Its subcellular location is the cytoplasm. The catalysed reaction is adenosine(1518)/adenosine(1519) in 16S rRNA + 4 S-adenosyl-L-methionine = N(6)-dimethyladenosine(1518)/N(6)-dimethyladenosine(1519) in 16S rRNA + 4 S-adenosyl-L-homocysteine + 4 H(+). In terms of biological role, specifically dimethylates two adjacent adenosines (A1518 and A1519) in the loop of a conserved hairpin near the 3'-end of 16S rRNA in the 30S particle. May play a critical role in biogenesis of 30S subunits. This chain is Ribosomal RNA small subunit methyltransferase A, found in Campylobacter concisus (strain 13826).